The sequence spans 89 residues: MTKIKTVTFVNTYPGGSMKNLLDTEGTVLFPFQTEIHFIWTIFSTVKRLVIGTRDHICQKQYWSACLCILLLMAYVGLCAAVVWFVVPC.

It is found in the cell membrane. ABI may interact with a target in the cell membrane, which could be the product of the host's cmrA gene, and cause disruption of the cellular membrane such that lysis of the infected cell and death of the infecting phage would result. In Escherichia coli, this protein is Abortive infection protein (abi).